Reading from the N-terminus, the 150-residue chain is uncharacterized protein (150 aa).

The region spanning 5-66 (LDRTDKMLLE…KPNYKKLNLG (62 aa)) is the HTH asnC-type domain. The segment at residues 24-43 (IAALSKKLGIPRTTVHYRIK) is a DNA-binding region (H-T-H motif).

This is an uncharacterized protein from Pyrococcus furiosus (strain ATCC 43587 / DSM 3638 / JCM 8422 / Vc1).